The following is a 463-amino-acid chain: Xanthine permease XanP (463 aa).

Transmembrane regions (helical) follow at residues 43 to 63 (LLAM…ALGL), 71 to 91 (IISM…KAWG), 93 to 113 (VGSG…PLIM), 126 to 146 (PTMM…EMVI), 156 to 176 (IITP…LIQV), 192 to 212 (TFGA…IILL), 222 to 242 (VASL…MGML), 260 to 280 (LYYG…VFMI), 352 to 372 (GFVV…SGFV), 379 to 399 (VLGG…VRIV), 409 to 429 (ILII…PLIL), and 439 to 459 (LLSS…LIFP).

It belongs to the nucleobase:cation symporter-2 (NCS2) (TC 2.A.40) family.

Its subcellular location is the cell inner membrane. The enzyme catalyses xanthine(in) + H(+)(in) = xanthine(out) + H(+)(out). In terms of biological role, specific, proton motive force-dependent high-affinity transporter for xanthine. In Escherichia coli O6:H1 (strain CFT073 / ATCC 700928 / UPEC), this protein is Xanthine permease XanP (xanP).